A 155-amino-acid polypeptide reads, in one-letter code: Regulatory protein RecX (155 aa).

This sequence belongs to the RecX family.

The protein localises to the cytoplasm. Functionally, modulates RecA activity. This is Regulatory protein RecX from Vibrio campbellii (strain ATCC BAA-1116).